Here is a 265-residue protein sequence, read N- to C-terminus: uncharacterized protein (265 aa).

The protein localises to the mitochondrion. This is an uncharacterized protein from Paramecium tetraurelia.